The chain runs to 327 residues: 2-methoxy-6-polyprenyl-1,4-benzoquinol methylase, mitochondrial (327 aa).

Residues 1-42 (MAAPGSCALWSYCGRGWSRAMRGCQLLGLRSSWPGDLLSARL) constitute a mitochondrion transit peptide. S-adenosyl-L-methionine-binding positions include Thr117, Asp171, and 199–200 (DA).

The protein belongs to the class I-like SAM-binding methyltransferase superfamily. MenG/UbiE family. In terms of assembly, component of a multi-subunit COQ enzyme complex, composed of at least COQ3, COQ4, COQ5, COQ6, COQ7 and COQ9. Interacts with PYURF; the interaction is direct, stabilizes COQ5 protein and associates PYURF with COQ enzyme complex. As to expression, widely expressed, with highest levels in liver, lung, placenta and skeletal muscle.

It localises to the mitochondrion inner membrane. It carries out the reaction 2-methoxy-6-(all-trans-decaprenyl)benzene-1,4-diol + S-adenosyl-L-methionine = 5-methoxy-2-methyl-3-(all-trans-decaprenyl)benzene-1,4-diol + S-adenosyl-L-homocysteine + H(+). The protein operates within cofactor biosynthesis; ubiquinone biosynthesis. Its function is as follows. Methyltransferase required for the conversion of 2-decaprenyl-6-methoxy-1,4-benzoquinol (DDMQH2) to 2-decaprenyl-3-methyl-6-methoxy-1,4-benzoquinol (DMQH2). The sequence is that of 2-methoxy-6-polyprenyl-1,4-benzoquinol methylase, mitochondrial from Homo sapiens (Human).